The sequence spans 207 residues: Keratin-associated protein 27-1 (207 aa).

A disordered region spans residues 184–207 (QLLESSPGVEPTCCVTGGSQLPSK).

Belongs to the PMG family. In terms of assembly, interacts with hair keratins.

Its function is as follows. In the hair cortex, hair keratin intermediate filaments are embedded in an interfilamentous matrix, consisting of hair keratin-associated proteins (KRTAP), which are essential for the formation of a rigid and resistant hair shaft through their extensive disulfide bond cross-linking with abundant cysteine residues of hair keratins. The matrix proteins include the high-sulfur and high-glycine-tyrosine keratins. The chain is Keratin-associated protein 27-1 (KRTAP27-1) from Homo sapiens (Human).